The sequence spans 423 residues: MSNDSIKLIDEIGKKARKAARQLAWLDSGSKNATLHAMADALIACKKILQVENEKDLEAGEKNGLTDAMLDRLRLTDQVIASMAEGIRQVAALPDPIGEINHMRRLANQLQVGKMRVPLGVIGIIYESRPNVTADAAALCVKSGNAVILRGGSEAFHSNRAIAAALAQGMEKGRVPSDAVQVVSTTDRAAVSALLKADQYVDIIIPRGGKGLIQRVMDEATIPVIKHLDGICHTYIDADADPAKAIDITFNGKMQRTGVCNATETLLIHEKVAKTILPALAKRLNQADCVLRGCPETIRLVGEVAPVIPATEEDWDTEYLAAILAIRVVKNLEEAMDHIDAHSSRHTEVIVTENHATAMRFVREVDASAVMVNASSRFNDGFQFGLGAEMGISTDKLHVRGPVGLEGLTCEKWIVLGDGQLRS.

This sequence belongs to the gamma-glutamyl phosphate reductase family.

The protein resides in the cytoplasm. It carries out the reaction L-glutamate 5-semialdehyde + phosphate + NADP(+) = L-glutamyl 5-phosphate + NADPH + H(+). It participates in amino-acid biosynthesis; L-proline biosynthesis; L-glutamate 5-semialdehyde from L-glutamate: step 2/2. In terms of biological role, catalyzes the NADPH-dependent reduction of L-glutamate 5-phosphate into L-glutamate 5-semialdehyde and phosphate. The product spontaneously undergoes cyclization to form 1-pyrroline-5-carboxylate. The protein is Gamma-glutamyl phosphate reductase of Magnetococcus marinus (strain ATCC BAA-1437 / JCM 17883 / MC-1).